Here is a 104-residue protein sequence, read N- to C-terminus: V-type ATP synthase subunit F (104 aa).

Belongs to the V-ATPase F subunit family.

Produces ATP from ADP in the presence of a proton gradient across the membrane. This Thermus thermophilus (strain ATCC 27634 / DSM 579 / HB8) protein is V-type ATP synthase subunit F (atpF).